Consider the following 443-residue polypeptide: Thymidine phosphorylase (443 aa).

The protein belongs to the thymidine/pyrimidine-nucleoside phosphorylase family. As to quaternary structure, homodimer.

The catalysed reaction is thymidine + phosphate = 2-deoxy-alpha-D-ribose 1-phosphate + thymine. Its pathway is pyrimidine metabolism; dTMP biosynthesis via salvage pathway; dTMP from thymine: step 1/2. In terms of biological role, the enzymes which catalyze the reversible phosphorolysis of pyrimidine nucleosides are involved in the degradation of these compounds and in their utilization as carbon and energy sources, or in the rescue of pyrimidine bases for nucleotide synthesis. The polypeptide is Thymidine phosphorylase (Shewanella oneidensis (strain ATCC 700550 / JCM 31522 / CIP 106686 / LMG 19005 / NCIMB 14063 / MR-1)).